Reading from the N-terminus, the 358-residue chain is Peptide chain release factor 1 (358 aa).

Gln-233 bears the N5-methylglutamine mark.

Belongs to the prokaryotic/mitochondrial release factor family. In terms of processing, methylated by PrmC. Methylation increases the termination efficiency of RF1.

It is found in the cytoplasm. In terms of biological role, peptide chain release factor 1 directs the termination of translation in response to the peptide chain termination codons UAG and UAA. The sequence is that of Peptide chain release factor 1 from Clostridium botulinum (strain Loch Maree / Type A3).